A 298-amino-acid polypeptide reads, in one-letter code: Protein REVEILLE 8 (298 aa).

Residues 1-44 form a disordered region; sequence MSSSPSRNPTNAEAPPPPPTSTDAVAEGSSKKVRKPYTITKSRE. Positions 38 to 92 constitute an HTH myb-type domain; that stretch reads TITKSRESWTEEEHDKFLEALQLFDRDWKKIEDFVGSKTVIQIRSHAQKYFLKVQ. The segment at residues 65–88 is a DNA-binding region (H-T-H motif); that stretch reads WKKIEDFVGSKTVIQIRSHAQKYF. A disordered region spans residues 96–123; it reads TLAHVPPPRPKRKAAHPYPQKASKNAQM.

Its subcellular location is the nucleus. Its function is as follows. Transcriptional activator of evening element (EE)-containing clock-controlled genes. Forms a negative feedback loop with APRR5. Regulates the pattern of histone H3 acetylation of the TOC1 promoter. RVE4, RVE6 and RVE8 are components of the circadian system acting synergistically to regulate flowering time, redundantly to regulate leaf growth, and antagonistically to regulate hypocotyl elongation; their action seems independent of ZTL and HY5. This chain is Protein REVEILLE 8, found in Arabidopsis thaliana (Mouse-ear cress).